The chain runs to 336 residues: uncharacterized protein (336 aa).

It belongs to the GppA/Ppx family.

This is an uncharacterized protein from Streptomyces coelicolor (strain ATCC BAA-471 / A3(2) / M145).